A 434-amino-acid polypeptide reads, in one-letter code: 3-phosphoshikimate 1-carboxyvinyltransferase (434 aa).

3 residues coordinate 3-phosphoshikimate: lysine 22, serine 23, and arginine 27. A phosphoenolpyruvate-binding site is contributed by lysine 22. Positions 93 and 121 each coordinate phosphoenolpyruvate. 3-phosphoshikimate contacts are provided by serine 168, serine 169, glutamine 170, serine 199, aspartate 320, and lysine 347. Glutamine 170 contacts phosphoenolpyruvate. The active-site Proton acceptor is the aspartate 320. Residues arginine 351, arginine 394, and lysine 419 each contribute to the phosphoenolpyruvate site.

Belongs to the EPSP synthase family. As to quaternary structure, monomer.

It localises to the cytoplasm. The enzyme catalyses 3-phosphoshikimate + phosphoenolpyruvate = 5-O-(1-carboxyvinyl)-3-phosphoshikimate + phosphate. The protein operates within metabolic intermediate biosynthesis; chorismate biosynthesis; chorismate from D-erythrose 4-phosphate and phosphoenolpyruvate: step 6/7. Its function is as follows. Catalyzes the transfer of the enolpyruvyl moiety of phosphoenolpyruvate (PEP) to the 5-hydroxyl of shikimate-3-phosphate (S3P) to produce enolpyruvyl shikimate-3-phosphate and inorganic phosphate. The chain is 3-phosphoshikimate 1-carboxyvinyltransferase from Burkholderia vietnamiensis (strain G4 / LMG 22486) (Burkholderia cepacia (strain R1808)).